The sequence spans 389 residues: S-adenosylmethionine synthase (389 aa).

Position 15 (H15) interacts with ATP. D17 serves as a coordination point for Mg(2+). E43 serves as a coordination point for K(+). Residues E56 and Q99 each coordinate L-methionine. The tract at residues 99-109 (QSPDIAQGVNE) is flexible loop. Residues 166 to 168 (DAK), 234 to 235 (RF), D243, 249 to 250 (RK), A266, and K270 contribute to the ATP site. L-methionine is bound at residue D243. K274 serves as a coordination point for L-methionine.

The protein belongs to the AdoMet synthase family. In terms of assembly, homotetramer; dimer of dimers. The cofactor is Mg(2+). K(+) is required as a cofactor.

It is found in the cytoplasm. It carries out the reaction L-methionine + ATP + H2O = S-adenosyl-L-methionine + phosphate + diphosphate. It participates in amino-acid biosynthesis; S-adenosyl-L-methionine biosynthesis; S-adenosyl-L-methionine from L-methionine: step 1/1. Catalyzes the formation of S-adenosylmethionine (AdoMet) from methionine and ATP. The overall synthetic reaction is composed of two sequential steps, AdoMet formation and the subsequent tripolyphosphate hydrolysis which occurs prior to release of AdoMet from the enzyme. The protein is S-adenosylmethionine synthase of Neisseria meningitidis serogroup B (strain ATCC BAA-335 / MC58).